A 160-amino-acid polypeptide reads, in one-letter code: Secreted RxLR effector protein 83 (160 aa).

The N-terminal stretch at 1 to 21 is a signal peptide; it reads MLVLLAATFFIYISRLTSTDA. The RxLR signature appears at 27–30; the sequence is RGLR. 2 N-linked (GlcNAc...) asparagine glycosylation sites follow: asparagine 39 and asparagine 131.

Belongs to the RxLR effector family.

Its subcellular location is the secreted. The protein resides in the host nucleus. It localises to the host cytoplasm. Its function is as follows. Secreted effector that completely suppresses the host cell death induced by cell death-inducing proteins. This is Secreted RxLR effector protein 83 from Plasmopara viticola (Downy mildew of grapevine).